The primary structure comprises 489 residues: Beta-galactosidase (489 aa).

Lysine 116 carries the N6-methyllysine; partial modification. The residue at position 135 (lysine 135) is an N6-methyllysine. Catalysis depends on glutamate 206, which acts as the Proton donor. N6-methyllysine; partial is present on residues lysine 273 and lysine 311. The residue at position 332 (lysine 332) is an N6-methyllysine. Residue glutamate 387 is the Nucleophile of the active site.

In terms of assembly, homotetramer.

The enzyme catalyses Hydrolysis of terminal non-reducing beta-D-galactose residues in beta-D-galactosides.. This is Beta-galactosidase (lacS) from Saccharolobus solfataricus (strain ATCC 35092 / DSM 1617 / JCM 11322 / P2) (Sulfolobus solfataricus).